The chain runs to 698 residues: Protein let-99 (698 aa).

The region spanning 23-107 (FRSNLSLKTN…SESRIYLFMK (85 aa)) is the DEP domain. Disordered stretches follow at residues 115-188 (PKPR…DDEI) and 653-672 (ITRS…QASP). Residues 146–157 (RPPKARLPRRLS) are compositionally biased toward basic residues. A compositionally biased stretch (basic and acidic residues) spans 178 to 188 (HGFDDHKDDEI).

Its subcellular location is the cytoplasm. The protein localises to the cell cortex. Required for the proper orientation of spindles after the establishment of polarity. May play a role in interactions between the astral microtubules and the cortical cytoskeleton. Required for asymmetric forces on nuclei and spindles. Acts downstream of the PAR signaling as an intermediate that transduces polarity information to the machinery that positions the mitotic spindle, possibly by regulating force generation. Regulates gpr-1/2 asymmetric cortical localization during the first embryonic cell divisions. Acts antagonistically to the gpr-1/2 signaling pathway. Regulates mes-1 expression and/or localization pattern during early embryogenesis. This chain is Protein let-99 (let-99), found in Caenorhabditis elegans.